Consider the following 211-residue polypeptide: Ribosomal RNA small subunit methyltransferase G (211 aa).

S-adenosyl-L-methionine-binding positions include G81, L86, 132 to 133 (VE), and R147.

Belongs to the methyltransferase superfamily. RNA methyltransferase RsmG family.

The protein localises to the cytoplasm. It catalyses the reaction guanosine(527) in 16S rRNA + S-adenosyl-L-methionine = N(7)-methylguanosine(527) in 16S rRNA + S-adenosyl-L-homocysteine. Its function is as follows. Specifically methylates the N7 position of guanine in position 527 of 16S rRNA. This chain is Ribosomal RNA small subunit methyltransferase G, found in Actinobacillus succinogenes (strain ATCC 55618 / DSM 22257 / CCUG 43843 / 130Z).